The primary structure comprises 160 residues: Negative modulator of initiation of replication (160 aa).

It belongs to the SeqA family. Homodimer. Polymerizes to form helical filaments.

The protein localises to the cytoplasm. Functionally, negative regulator of replication initiation, which contributes to regulation of DNA replication and ensures that replication initiation occurs exactly once per chromosome per cell cycle. Binds to pairs of hemimethylated GATC sequences in the oriC region, thus preventing assembly of replication proteins and re-initiation at newly replicated origins. Repression is relieved when the region becomes fully methylated. The protein is Negative modulator of initiation of replication of Idiomarina loihiensis (strain ATCC BAA-735 / DSM 15497 / L2-TR).